The chain runs to 95 residues: Integration host factor subunit beta (95 aa).

A disordered region spans residues 56 to 95 (RAPRTGRNPKTGETVELDGKHVPHFKPGKELRDRVNESIA). The span at 72–95 (LDGKHVPHFKPGKELRDRVNESIA) shows a compositional bias: basic and acidic residues.

The protein belongs to the bacterial histone-like protein family. Heterodimer of an alpha and a beta chain.

Its function is as follows. This protein is one of the two subunits of integration host factor, a specific DNA-binding protein that functions in genetic recombination as well as in transcriptional and translational control. The polypeptide is Integration host factor subunit beta (Pseudoalteromonas translucida (strain TAC 125)).